The primary structure comprises 93 residues: Phosphoribosyl-ATP pyrophosphatase (93 aa).

The protein belongs to the PRA-PH family.

Its subcellular location is the cytoplasm. The enzyme catalyses 1-(5-phospho-beta-D-ribosyl)-ATP + H2O = 1-(5-phospho-beta-D-ribosyl)-5'-AMP + diphosphate + H(+). It participates in amino-acid biosynthesis; L-histidine biosynthesis; L-histidine from 5-phospho-alpha-D-ribose 1-diphosphate: step 2/9. This Mycobacterium sp. (strain JLS) protein is Phosphoribosyl-ATP pyrophosphatase.